Here is a 239-residue protein sequence, read N- to C-terminus: Exosome complex exonuclease RRP46 homolog (239 aa).

Position 1 is an N-acetylmethionine (Met1).

This sequence belongs to the RNase PH family. As to quaternary structure, probable component of the RNA exosome complex.

Its subcellular location is the nucleus. The protein resides in the nucleolus. Probable component of the exosome 3'-&gt;5' exoribonuclease complex, a complex that degrades inherently unstable mRNAs containing AU-rich elements (AREs) within their 3'-untranslated regions. This Arabidopsis thaliana (Mouse-ear cress) protein is Exosome complex exonuclease RRP46 homolog.